Consider the following 150-residue polypeptide: MAFHSTLLVFLAGLVFLSEAAPLVSHGSVDSKCPLMVKVLDAVRGSPAANVAVKVFKKAADGTWQDFATGKTTEFGEIHELTTEEQFVEGVYRVEFDTSSYWKGLGLSPFHEYADVVFTANDSGHRHYTIAALLSPFSYSTTAVVSDPQE.

Residues 1–20 form the signal peptide; that stretch reads MAFHSTLLVFLAGLVFLSEA. At Cys33 the chain carries Sulfocysteine. 3 residues coordinate L-thyroxine: Lys38, Glu77, and Ser140.

The protein belongs to the transthyretin family. Homotetramer. Dimer of dimers. In the homotetramer, subunits assemble around a central channel that can accommodate two ligand molecules. Post-translationally, sulfonation of the reactive cysteine Cys-33 enhances the stability of the native conformation of TTR, avoiding misassembly of the protein leading to amyloid formation. In terms of tissue distribution, detected in serum (at protein level). Detected in liver and choroid plexus.

It localises to the secreted. Functionally, thyroid hormone-binding protein. Probably transports thyroxine from the bloodstream to the brain. The sequence is that of Transthyretin (TTR) from Gallus gallus (Chicken).